Consider the following 384-residue polypeptide: Carbamoyl phosphate synthase small chain (384 aa).

Positions Met1–Glu193 are CPSase. 3 residues coordinate L-glutamine: Ser51, Gly245, and Gly247. Positions His197 to Arg384 constitute a Glutamine amidotransferase type-1 domain. Cys273 functions as the Nucleophile in the catalytic mechanism. Residues Leu274, Gln277, Asn315, Gly317, and Phe318 each contribute to the L-glutamine site. Residues His357 and Glu359 contribute to the active site.

Belongs to the CarA family. Composed of two chains; the small (or glutamine) chain promotes the hydrolysis of glutamine to ammonia, which is used by the large (or ammonia) chain to synthesize carbamoyl phosphate. Tetramer of heterodimers (alpha,beta)4.

The enzyme catalyses hydrogencarbonate + L-glutamine + 2 ATP + H2O = carbamoyl phosphate + L-glutamate + 2 ADP + phosphate + 2 H(+). It catalyses the reaction L-glutamine + H2O = L-glutamate + NH4(+). Its pathway is amino-acid biosynthesis; L-arginine biosynthesis; carbamoyl phosphate from bicarbonate: step 1/1. It participates in pyrimidine metabolism; UMP biosynthesis via de novo pathway; (S)-dihydroorotate from bicarbonate: step 1/3. In terms of biological role, small subunit of the glutamine-dependent carbamoyl phosphate synthetase (CPSase). CPSase catalyzes the formation of carbamoyl phosphate from the ammonia moiety of glutamine, carbonate, and phosphate donated by ATP, constituting the first step of 2 biosynthetic pathways, one leading to arginine and/or urea and the other to pyrimidine nucleotides. The small subunit (glutamine amidotransferase) binds and cleaves glutamine to supply the large subunit with the substrate ammonia. This is Carbamoyl phosphate synthase small chain from Stutzerimonas stutzeri (Pseudomonas stutzeri).